The following is a 419-amino-acid chain: MSSIEQIMLTLGENARQASRAMMRASGTAKNRALLAMAELIIDGKAALQAANALDLEAARANGLEPALLDRLTLSDRSVQLMAEGLRQIAALPDPVGSLGPTQVRPNGMRVAQMRVPLGVIGIIYESRPNVTIDAAALCLKSGNATILRGGSEALHSNLALGAIVQAGLAAAELPPAAVQVVSTTDRAAVGKLVTMTEHIDVIVPRGGKGLIARLAQEARVPLIKHLDGNCHVYIDAAADPDRALEIAFNAKTYRYGVCGSMETLLVHRAIAPTQLPRIARALIEHGVELRGCERSQAIVPGMAAASEEDWGTEYLGPVLAVRVVDDLDQAMEHIARWGSGHTDAIVTENLAAAQRFQREVDSSSVYVNLPTVFADGFEYGLGAEIGISTNRLHARGPVGLEGLTTYKWVLTGEGQTRG.

Belongs to the gamma-glutamyl phosphate reductase family.

Its subcellular location is the cytoplasm. It catalyses the reaction L-glutamate 5-semialdehyde + phosphate + NADP(+) = L-glutamyl 5-phosphate + NADPH + H(+). Its pathway is amino-acid biosynthesis; L-proline biosynthesis; L-glutamate 5-semialdehyde from L-glutamate: step 2/2. Its function is as follows. Catalyzes the NADPH-dependent reduction of L-glutamate 5-phosphate into L-glutamate 5-semialdehyde and phosphate. The product spontaneously undergoes cyclization to form 1-pyrroline-5-carboxylate. The protein is Gamma-glutamyl phosphate reductase of Bordetella avium (strain 197N).